A 56-amino-acid chain; its full sequence is Small ribosomal subunit protein bS21 (56 aa).

Belongs to the bacterial ribosomal protein bS21 family.

This Synechococcus sp. (strain WH7803) protein is Small ribosomal subunit protein bS21.